A 306-amino-acid chain; its full sequence is IN2-2 protein (306 aa).

Residue Tyr-64 is the Proton donor of the active site. His-131 provides a ligand contact to substrate. 210-220 contacts NADP(+); the sequence is SPLGRGFFSSG. Residues 272–306 form a disordered region; it reads LGSPPRKRRLPHTWHNKNRQLQPERGGTVCEAYTG. Over residues 276-289 the composition is skewed to basic residues; the sequence is PRKRRLPHTWHNKN.

This sequence belongs to the aldo/keto reductase family. Aldo/keto reductase 2 subfamily. Leaves and roots.

This is IN2-2 protein (IN2-2) from Zea mays (Maize).